We begin with the raw amino-acid sequence, 502 residues long: MTEKKYIVALDQGTTSSRAVVMDHDANIISVSQREFEQIYPKPGWVEHDPMEIWATQSSTLVEVLAKADISSDQIAAIGITNQRETTIVWEKETGKPIYNAIVWQCRRTAEICEHLKRDGLEDYIRSNTGLVIDPYFSGTKVKWILDHVEGSRERARRGELLFGTVDTWLIWKMTQGRVHVTDYTNASRTMLFNIHTLGWDDKMLEVLDIPREMLPEVRRSSEVYGQTNIGGKGGTRIPISGIAGDQQAALFGQLCVKEGMAKNTYGTGCFMLMNTGEKAVKSENGLLTTIACGPTGEVNYALEGAVFMAGASIQWLRDEMKLINDAYDSEYFATKVQNTNGVYVVPAFTGLGAPYWDPYARGAIFGLTRGVNANHIIRATLESIAYQTRDVLEAMQADSGIRLHALRVDGGAVANNFLMQFQSDILGTRVERPEVREVTALGAAYLAGLAVGFWQNLDELQEKAVIEREFRPGIETTERNYRYAGWKKAVKRAMAWEKHDE.

Thr-14 serves as a coordination point for ADP. The ATP site is built by Thr-14, Thr-15, and Ser-16. A sn-glycerol 3-phosphate-binding site is contributed by Thr-14. An ADP-binding site is contributed by Arg-18. Sn-glycerol 3-phosphate contacts are provided by Arg-84, Glu-85, Tyr-136, and Asp-246. Arg-84, Glu-85, Tyr-136, Asp-246, and Gln-247 together coordinate glycerol. ADP is bound by residues Thr-268 and Gly-311. ATP is bound by residues Thr-268, Gly-311, Gln-315, and Gly-412. ADP is bound by residues Gly-412 and Asn-416.

This sequence belongs to the FGGY kinase family. In terms of assembly, homotetramer and homodimer (in equilibrium). Heterodimer with EIIA-Glc. Binds 1 zinc ion per glycerol kinase EIIA-Glc dimer. The zinc ion is important for dimerization.

It carries out the reaction glycerol + ATP = sn-glycerol 3-phosphate + ADP + H(+). It functions in the pathway polyol metabolism; glycerol degradation via glycerol kinase pathway; sn-glycerol 3-phosphate from glycerol: step 1/1. Its activity is regulated as follows. Activity of this regulatory enzyme is affected by several metabolites. Allosterically and non-competitively inhibited by fructose 1,6-bisphosphate (FBP) and unphosphorylated phosphocarrier protein EIIA-Glc (III-Glc), an integral component of the bacterial phosphotransferase (PTS) system. Functionally, key enzyme in the regulation of glycerol uptake and metabolism. Catalyzes the phosphorylation of glycerol to yield sn-glycerol 3-phosphate. The protein is Glycerol kinase of Shigella boydii serotype 18 (strain CDC 3083-94 / BS512).